A 768-amino-acid chain; its full sequence is uncharacterized protein (768 aa).

To E.coli YkiA.

This is an uncharacterized protein from Escherichia coli (strain K12).